Here is a 527-residue protein sequence, read N- to C-terminus: Abrin-b (527 aa).

Glutamine 1 carries the post-translational modification Pyrrolidone carboxylic acid. A glycan (N-linked (GlcNAc...) asparagine) is linked at asparagine 110. Residue glutamate 163 is part of the active site. 3 disulfide bridges follow: cysteine 246–cysteine 268, cysteine 285–cysteine 304, and cysteine 328–cysteine 345. The Ricin B-type lectin 1 domain occupies 272–399; the sequence is YEPTVRIGGR…YLMRQGWRTG (128 aa). The 1-alpha repeat unit spans residues 282–324; the sequence is NGMCVDVYDDGYHNGNRIIAWKCKDRLEENQLWTLKSDKTIRS. Residues 325-365 form a 1-beta repeat; that stretch reads NGKCLTTEGYAPGNYVMIYDCTSAVAEATYWEIWDNGTIIN. Asparagine 360 and asparagine 400 each carry an N-linked (GlcNAc...) asparagine glycan. A 1-gamma repeat occupies 368-400; sequence SALVLSAESSSMGGTLTVQTNEYLMRQGWRTGN. The 125-residue stretch at 402–526 folds into the Ricin B-type lectin 2 domain; that stretch reads TSPFVTSISG…GKPNQIWLTL (125 aa). The stretch at 413-448 is one 2-alpha repeat; that stretch reads SDLCMQAQGSNVWLAYCDNNKKEQQWALYTDGSIRS. Intrachain disulfides connect cysteine 416–cysteine 429 and cysteine 455–cysteine 472. One copy of the 2-beta repeat lies at 452–491; the sequence is TNNCLTSKDHKQGSPIVLMACSNGWASQRWLFRNDGSIYN. A 2-gamma repeat occupies 494 to 527; the sequence is DDMVMDVKRSDPSLKEIILHPYHGKPNQIWLTLF.

In the N-terminal section; belongs to the ribosome-inactivating protein family. Type 2 RIP subfamily. Disulfide-linked dimer of A and B chains.

The enzyme catalyses Endohydrolysis of the N-glycosidic bond at one specific adenosine on the 28S rRNA.. In terms of biological role, the A chain is responsible for inhibiting protein synthesis through the catalytic inactivation of 60S ribosomal subunits by removing adenine from position 4,324 of 28S rRNA. Abrin-a is more toxic than ricin. The B chain is a galactose-specific lectin that facilitates the binding of abrin to the cell membrane that precedes endocytosis. This is Abrin-b from Abrus precatorius (Indian licorice).